The sequence spans 278 residues: Sulfur carrier protein FdhD (278 aa).

Cys121 functions as the Cysteine persulfide intermediate in the catalytic mechanism. Position 260 to 265 (Phe260 to Arg265) interacts with Mo-bis(molybdopterin guanine dinucleotide).

Belongs to the FdhD family.

It is found in the cytoplasm. Functionally, required for formate dehydrogenase (FDH) activity. Acts as a sulfur carrier protein that transfers sulfur from IscS to the molybdenum cofactor prior to its insertion into FDH. The polypeptide is Sulfur carrier protein FdhD (Salmonella choleraesuis (strain SC-B67)).